Here is a 128-residue protein sequence, read N- to C-terminus: Fluoride-specific ion channel FluC (128 aa).

The next 4 membrane-spanning stretches (helical) occupy residues 5–25 (IVAI…LSLA), 35–55 (LGTL…AVVF), 67–87 (LFVI…SVEV), and 96–116 (FGWA…LTAL). Na(+) contacts are provided by Gly-75 and Thr-78.

The protein belongs to the fluoride channel Fluc/FEX (TC 1.A.43) family.

The protein localises to the cell inner membrane. The catalysed reaction is fluoride(in) = fluoride(out). Na(+) is not transported, but it plays an essential structural role and its presence is essential for fluoride channel function. In terms of biological role, fluoride-specific ion channel. Important for reducing fluoride concentration in the cell, thus reducing its toxicity. The protein is Fluoride-specific ion channel FluC of Burkholderia lata (strain ATCC 17760 / DSM 23089 / LMG 22485 / NCIMB 9086 / R18194 / 383).